The sequence spans 355 residues: Uroporphyrinogen decarboxylase (355 aa).

Substrate-binding positions include 27–31 (RQAGR), Asp-77, Tyr-154, Thr-209, and His-327.

The protein belongs to the uroporphyrinogen decarboxylase family. Homodimer.

It is found in the cytoplasm. It catalyses the reaction uroporphyrinogen III + 4 H(+) = coproporphyrinogen III + 4 CO2. It functions in the pathway porphyrin-containing compound metabolism; protoporphyrin-IX biosynthesis; coproporphyrinogen-III from 5-aminolevulinate: step 4/4. In terms of biological role, catalyzes the decarboxylation of four acetate groups of uroporphyrinogen-III to yield coproporphyrinogen-III. This chain is Uroporphyrinogen decarboxylase, found in Pseudoalteromonas atlantica (strain T6c / ATCC BAA-1087).